Reading from the N-terminus, the 245-residue chain is Orotidine 5'-phosphate decarboxylase (245 aa).

Substrate-binding positions include Asp-22, Lys-44, 71–80 (DLKFHDIPNT), Thr-131, Arg-192, Gln-201, Gly-221, and Arg-222. The Proton donor role is filled by Lys-73.

This sequence belongs to the OMP decarboxylase family. Type 1 subfamily. Homodimer.

It catalyses the reaction orotidine 5'-phosphate + H(+) = UMP + CO2. The protein operates within pyrimidine metabolism; UMP biosynthesis via de novo pathway; UMP from orotate: step 2/2. Catalyzes the decarboxylation of orotidine 5'-monophosphate (OMP) to uridine 5'-monophosphate (UMP). This Yersinia pseudotuberculosis serotype O:3 (strain YPIII) protein is Orotidine 5'-phosphate decarboxylase.